The primary structure comprises 168 residues: Cell division inhibitor SulA (168 aa).

Residues 105–111 (ALETGNY) form a ftsZ binding region. Positions 161–168 (RIHSGMVH) are lon protease binding.

It belongs to the SulA family. As to quaternary structure, interacts with FtsZ. Post-translationally, is rapidly cleaved and degraded by the Lon protease once DNA damage is repaired.

Component of the SOS system and an inhibitor of cell division. Accumulation of SulA causes rapid cessation of cell division and the appearance of long, non-septate filaments. In the presence of GTP, binds a polymerization-competent form of FtsZ in a 1:1 ratio, thus inhibiting FtsZ polymerization and therefore preventing it from participating in the assembly of the Z ring. This mechanism prevents the premature segregation of damaged DNA to daughter cells during cell division. This Cronobacter sakazakii (strain ATCC BAA-894) (Enterobacter sakazakii) protein is Cell division inhibitor SulA.